A 161-amino-acid polypeptide reads, in one-letter code: Dihydrofolate reductase (161 aa).

Residues 2–161 form the DHFR domain; the sequence is NISLIAAISK…YNYSFEILSR (160 aa). 6–8 is a binding site for substrate; sequence IAA. Residues 7-8 and 15-20 each bind NADP(+); these read AA and IGYKNK. Asp28 lines the substrate pocket. Residue 44–47 participates in NADP(+) binding; the sequence is GRLT. Substrate is bound at residue Arg59. NADP(+) contacts are provided by residues 64 to 66 and 96 to 101; these read ISS and IGGAKI. Thr115 is a binding site for substrate.

The protein belongs to the dihydrofolate reductase family.

It catalyses the reaction (6S)-5,6,7,8-tetrahydrofolate + NADP(+) = 7,8-dihydrofolate + NADPH + H(+). The protein operates within cofactor biosynthesis; tetrahydrofolate biosynthesis; 5,6,7,8-tetrahydrofolate from 7,8-dihydrofolate: step 1/1. Its function is as follows. Key enzyme in folate metabolism. Catalyzes an essential reaction for de novo glycine and purine synthesis, and for DNA precursor synthesis. The sequence is that of Dihydrofolate reductase (folA) from Buchnera aphidicola subsp. Acyrthosiphon pisum (strain APS) (Acyrthosiphon pisum symbiotic bacterium).